Consider the following 189-residue polypeptide: H/ACA ribonucleoprotein complex subunit 1-like protein 2 (189 aa).

Gly residues predominate over residues 1–12 (MRPPRGGGSFRG). Disordered regions lie at residues 1-39 (MRPPRGGGSFRGRGGRDNGGRGRGRGRGRGRFGGGNYDE) and 129-189 (RFLP…RGRA). A compositionally biased stretch (low complexity) spans 162-177 (GRGAPRGASRGFQPRG).

Belongs to the GAR1 family. Component of the small nucleolar ribonucleoprotein particle containing H/ACA-type snoRNAs (H/ACA snoRNPs).

It is found in the nucleus. It localises to the nucleolus. In terms of biological role, required for ribosome biogenesis. Part of a complex which catalyzes pseudouridylation of rRNA. This involves the isomerization of uridine such that the ribose is subsequently attached to C5, instead of the normal N1. Pseudouridine ('psi') residues may serve to stabilize the conformation of rRNAs. The chain is H/ACA ribonucleoprotein complex subunit 1-like protein 2 from Arabidopsis thaliana (Mouse-ear cress).